The chain runs to 53 residues: uncharacterized protein (53 aa).

It belongs to the ycf15 family.

The protein resides in the plastid. It is found in the chloroplast. This is an uncharacterized protein from Helianthus annuus (Common sunflower).